The following is a 246-amino-acid chain: Aquaporin SIP1-1 (246 aa).

The next 2 membrane-spanning stretches (helical) occupy residues 13 to 33 (AAVTFLWVLCVSTLGASTAAV) and 45 to 65 (YALLVTVSLLSVLLFAFNLLC). Residues 74–76 (NPT) carry the NPA 1 motif. 3 helical membrane passes run 95–115 (FPLALRFPAQAAGAVGGAMAI), 139–159 (GAAAELVLTFVITLAVLWIIV), and 166–186 (IVKTWMLSISTVCLVLTGAAY). Residues 192–194 (NPA) carry the NPA 2 motif. The helical transmembrane segment at 214–234 (VYWICPFVGAVLAAWVFRAVF) threads the bilayer.

This sequence belongs to the MIP/aquaporin (TC 1.A.8) family. SIP (TC 1.A.8.10) subfamily. Expressed in roots, leaves and anthers.

It is found in the membrane. Aquaporins facilitate the transport of water and small neutral solutes across cell membranes. In Oryza sativa subsp. japonica (Rice), this protein is Aquaporin SIP1-1 (SIP1-1).